The chain runs to 160 residues: Ribosomal RNA large subunit methyltransferase H (160 aa).

Residues Leu77, Gly109, and 128-133 each bind S-adenosyl-L-methionine; that span reads LSNLTF.

It belongs to the RNA methyltransferase RlmH family. As to quaternary structure, homodimer.

Its subcellular location is the cytoplasm. The enzyme catalyses pseudouridine(1915) in 23S rRNA + S-adenosyl-L-methionine = N(3)-methylpseudouridine(1915) in 23S rRNA + S-adenosyl-L-homocysteine + H(+). Its function is as follows. Specifically methylates the pseudouridine at position 1915 (m3Psi1915) in 23S rRNA. The sequence is that of Ribosomal RNA large subunit methyltransferase H from Desulforamulus reducens (strain ATCC BAA-1160 / DSM 100696 / MI-1) (Desulfotomaculum reducens).